We begin with the raw amino-acid sequence, 462 residues long: UDP-N-acetylmuramoylalanine--D-glutamate ligase (462 aa).

An ATP-binding site is contributed by 125-131 (GSDGKTT).

This sequence belongs to the MurCDEF family.

It localises to the cytoplasm. The catalysed reaction is UDP-N-acetyl-alpha-D-muramoyl-L-alanine + D-glutamate + ATP = UDP-N-acetyl-alpha-D-muramoyl-L-alanyl-D-glutamate + ADP + phosphate + H(+). Its pathway is cell wall biogenesis; peptidoglycan biosynthesis. Its function is as follows. Cell wall formation. Catalyzes the addition of glutamate to the nucleotide precursor UDP-N-acetylmuramoyl-L-alanine (UMA). The polypeptide is UDP-N-acetylmuramoylalanine--D-glutamate ligase (Clostridium acetobutylicum (strain ATCC 824 / DSM 792 / JCM 1419 / IAM 19013 / LMG 5710 / NBRC 13948 / NRRL B-527 / VKM B-1787 / 2291 / W)).